The primary structure comprises 128 residues: Ribonuclease P protein component (128 aa).

This sequence belongs to the RnpA family. As to quaternary structure, consists of a catalytic RNA component (M1 or rnpB) and a protein subunit.

The catalysed reaction is Endonucleolytic cleavage of RNA, removing 5'-extranucleotides from tRNA precursor.. Functionally, RNaseP catalyzes the removal of the 5'-leader sequence from pre-tRNA to produce the mature 5'-terminus. It can also cleave other RNA substrates such as 4.5S RNA. The protein component plays an auxiliary but essential role in vivo by binding to the 5'-leader sequence and broadening the substrate specificity of the ribozyme. The polypeptide is Ribonuclease P protein component (Prochlorococcus marinus (strain MIT 9313)).